The following is a 275-amino-acid chain: 2,3,4,5-tetrahydropyridine-2,6-dicarboxylate N-succinyltransferase (275 aa).

It belongs to the transferase hexapeptide repeat family.

Its subcellular location is the cytoplasm. The enzyme catalyses (S)-2,3,4,5-tetrahydrodipicolinate + succinyl-CoA + H2O = (S)-2-succinylamino-6-oxoheptanedioate + CoA. It participates in amino-acid biosynthesis; L-lysine biosynthesis via DAP pathway; LL-2,6-diaminopimelate from (S)-tetrahydrodipicolinate (succinylase route): step 1/3. This Cupriavidus taiwanensis (strain DSM 17343 / BCRC 17206 / CCUG 44338 / CIP 107171 / LMG 19424 / R1) (Ralstonia taiwanensis (strain LMG 19424)) protein is 2,3,4,5-tetrahydropyridine-2,6-dicarboxylate N-succinyltransferase.